Here is a 488-residue protein sequence, read N- to C-terminus: N-succinylglutamate 5-semialdehyde dehydrogenase (488 aa).

221–226 (GSSRTG) lines the NAD(+) pocket. Residues Glu244 and Cys278 contribute to the active site.

This sequence belongs to the aldehyde dehydrogenase family. AstD subfamily.

The catalysed reaction is N-succinyl-L-glutamate 5-semialdehyde + NAD(+) + H2O = N-succinyl-L-glutamate + NADH + 2 H(+). The protein operates within amino-acid degradation; L-arginine degradation via AST pathway; L-glutamate and succinate from L-arginine: step 4/5. In terms of biological role, catalyzes the NAD-dependent reduction of succinylglutamate semialdehyde into succinylglutamate. The chain is N-succinylglutamate 5-semialdehyde dehydrogenase from Pseudomonas fluorescens (strain Pf0-1).